The sequence spans 247 residues: Phosphate import ATP-binding protein PstB (247 aa).

In terms of domain architecture, ABC transporter spans 2-242 (CRDVNVYYGE…PRHPLTEDYI (241 aa)). 32–39 (GPSGCGKS) is an ATP binding site.

The protein belongs to the ABC transporter superfamily. Phosphate importer (TC 3.A.1.7) family. As to quaternary structure, the complex is composed of two ATP-binding proteins (PstB), two transmembrane proteins (PstC and PstA) and a solute-binding protein (PstS).

The protein localises to the cell inner membrane. It carries out the reaction phosphate(out) + ATP + H2O = ADP + 2 phosphate(in) + H(+). Functionally, part of the ABC transporter complex PstSACB involved in phosphate import. Responsible for energy coupling to the transport system. This is Phosphate import ATP-binding protein PstB from Methylococcus capsulatus (strain ATCC 33009 / NCIMB 11132 / Bath).